A 461-amino-acid polypeptide reads, in one-letter code: tRNA modification GTPase MnmE (461 aa).

The (6S)-5-formyl-5,6,7,8-tetrahydrofolate site is built by Arg23, Glu88, and Arg127. A TrmE-type G domain is found at Gly223–Phe383. Residue Asn233 participates in K(+) binding. GTP contacts are provided by residues Asn233–Ser238, Thr252–Thr258, and Asp277–Gly280. Ser237 provides a ligand contact to Mg(2+). Thr252, Ile254, and Thr257 together coordinate K(+). A Mg(2+)-binding site is contributed by Thr258. Lys461 contacts (6S)-5-formyl-5,6,7,8-tetrahydrofolate.

Belongs to the TRAFAC class TrmE-Era-EngA-EngB-Septin-like GTPase superfamily. TrmE GTPase family. Homodimer. Heterotetramer of two MnmE and two MnmG subunits. The cofactor is K(+).

Its subcellular location is the cytoplasm. In terms of biological role, exhibits a very high intrinsic GTPase hydrolysis rate. Involved in the addition of a carboxymethylaminomethyl (cmnm) group at the wobble position (U34) of certain tRNAs, forming tRNA-cmnm(5)s(2)U34. This chain is tRNA modification GTPase MnmE, found in Clostridium botulinum (strain Langeland / NCTC 10281 / Type F).